The chain runs to 141 residues: Large ribosomal subunit protein uL11 (141 aa).

The protein belongs to the universal ribosomal protein uL11 family. Part of the ribosomal stalk of the 50S ribosomal subunit. Interacts with L10 and the large rRNA to form the base of the stalk. L10 forms an elongated spine to which L12 dimers bind in a sequential fashion forming a multimeric L10(L12)X complex. Post-translationally, one or more lysine residues are methylated.

Its function is as follows. Forms part of the ribosomal stalk which helps the ribosome interact with GTP-bound translation factors. This is Large ribosomal subunit protein uL11 from Kosmotoga olearia (strain ATCC BAA-1733 / DSM 21960 / TBF 19.5.1).